A 236-amino-acid chain; its full sequence is UPF0257 lipoprotein YnfC (236 aa).

An N-terminal signal peptide occupies residues 1-16 (MKKPLLLTLLCMILAG). Cysteine 17 carries the N-palmitoyl cysteine lipid modification. A lipid anchor (S-diacylglycerol cysteine) is attached at cysteine 17.

Belongs to the UPF0257 family.

Its subcellular location is the cell membrane. The polypeptide is UPF0257 lipoprotein YnfC (Salmonella dublin (strain CT_02021853)).